A 48-amino-acid polypeptide reads, in one-letter code: Large ribosomal subunit protein bL33A (48 aa).

The protein belongs to the bacterial ribosomal protein bL33 family.

The protein is Large ribosomal subunit protein bL33A of Bacillus mycoides (strain KBAB4) (Bacillus weihenstephanensis).